Consider the following 279-residue polypeptide: Thymidylate synthase (279 aa).

Residue 133-134 participates in dUMP binding; it reads RR. The Nucleophile role is filled by C154. DUMP is bound by residues 178-181, N189, and 219-221; these read RSND and HIY. D181 serves as a coordination point for (6R)-5,10-methylene-5,6,7,8-tetrahydrofolate. Position 278 (A278) interacts with (6R)-5,10-methylene-5,6,7,8-tetrahydrofolate.

This sequence belongs to the thymidylate synthase family. Bacterial-type ThyA subfamily. As to quaternary structure, homodimer.

The protein localises to the cytoplasm. The enzyme catalyses dUMP + (6R)-5,10-methylene-5,6,7,8-tetrahydrofolate = 7,8-dihydrofolate + dTMP. The protein operates within pyrimidine metabolism; dTTP biosynthesis. Catalyzes the reductive methylation of 2'-deoxyuridine-5'-monophosphate (dUMP) to 2'-deoxythymidine-5'-monophosphate (dTMP) while utilizing 5,10-methylenetetrahydrofolate (mTHF) as the methyl donor and reductant in the reaction, yielding dihydrofolate (DHF) as a by-product. This enzymatic reaction provides an intracellular de novo source of dTMP, an essential precursor for DNA biosynthesis. This Streptococcus pneumoniae (strain 70585) protein is Thymidylate synthase.